A 359-amino-acid polypeptide reads, in one-letter code: Cytochrome c oxidase subunit 2 (359 aa).

A signal peptide spans 1-28 (MEQQNKRGLKRKALLGGVLGLGGLAMAG). Residue Cys-29 is the site of S-diacylglycerol cysteine attachment. Helical transmembrane passes span 64-84 (VWVAAWIIGIIMWGLFLTAIF) and 107-127 (VPLELVLTIVPIIIVMVLFFF). The tract at residues 168 to 203 (PGGQDYQGSDPERQAAAEASKKDPSGDNPIHGNSKS) is disordered. Residues 177–192 (DPERQAAAEASKKDPS) are compositionally biased toward basic and acidic residues. His-244, Cys-285, Glu-287, Cys-289, His-293, and Met-296 together coordinate Cu cation. The segment at 335 to 359 (YATSTSPFVSDRTATRDGENTQSNA) is disordered.

In terms of assembly, associates with subunits I, III and IV to form cytochrome c oxidase. The 4 subunit cytochrome c oxidase forms a supercomplex with the menaquinol-cytochrome c reductase complex (cytochrome bc1). Requires binuclear copper center (CuA) as cofactor.

Its subcellular location is the cell membrane. It catalyses the reaction 4 Fe(II)-[cytochrome c] + O2 + 8 H(+)(in) = 4 Fe(III)-[cytochrome c] + 2 H2O + 4 H(+)(out). In terms of biological role, subunits I and II form the functional core of the enzyme complex. Electrons originating in cytochrome c are transferred via heme a and Cu(A) to the binuclear center formed by heme a3 and Cu(B). This is Cytochrome c oxidase subunit 2 (ctaC) from Corynebacterium glutamicum (strain ATCC 13032 / DSM 20300 / JCM 1318 / BCRC 11384 / CCUG 27702 / LMG 3730 / NBRC 12168 / NCIMB 10025 / NRRL B-2784 / 534).